Consider the following 64-residue polypeptide: Conotoxin Leo-T1 (64 aa).

The N-terminal stretch at 1 to 22 (MRCLPVFIILLLLIPSAPSVDA) is a signal peptide. Positions 23–48 (QPKTEDDVPLASLHDNAKLTLQGLWD) are excised as a propeptide.

Belongs to the conotoxin T superfamily. Post-translationally, contains 2 disulfide bonds that can be either 'C1-C3, C2-C4' or 'C1-C4, C2-C3', since these disulfide connectivities have been observed for conotoxins with cysteine framework V (for examples, see AC P0DQQ7 and AC P81755). Expressed by the venom duct.

It localises to the secreted. The protein is Conotoxin Leo-T1 of Conus leopardus (Leopard cone).